A 206-amino-acid chain; its full sequence is Uridine kinase (206 aa).

Residue 9 to 16 (GGSGSGKT) coordinates ATP.

Belongs to the uridine kinase family.

It is found in the cytoplasm. The enzyme catalyses uridine + ATP = UMP + ADP + H(+). It catalyses the reaction cytidine + ATP = CMP + ADP + H(+). Its pathway is pyrimidine metabolism; CTP biosynthesis via salvage pathway; CTP from cytidine: step 1/3. The protein operates within pyrimidine metabolism; UMP biosynthesis via salvage pathway; UMP from uridine: step 1/1. In Borrelia duttonii (strain Ly), this protein is Uridine kinase.